We begin with the raw amino-acid sequence, 523 residues long: Alanine aminotransferase 2 (523 aa).

The tract at residues 1–25 is disordered; it reads MQRAAALVRRGCGPRTPSSWGRSQS. Residues A187, S188, Y216, N271, and S338 each contribute to the pyridoxal 5'-phosphate site. K341 bears the N6-(pyridoxal phosphate)lysine mark. Residue R350 participates in pyridoxal 5'-phosphate binding. N6-acetyllysine occurs at positions 415, 505, and 512.

It belongs to the class-I pyridoxal-phosphate-dependent aminotransferase family. Alanine aminotransferase subfamily. Homodimer. Requires pyridoxal 5'-phosphate as cofactor. As to expression, expressed at high levels in muscle, adipose tissue, kidney and brain and at lower levels in the liver and breast.

It catalyses the reaction L-alanine + 2-oxoglutarate = pyruvate + L-glutamate. It functions in the pathway amino-acid degradation; L-alanine degradation via transaminase pathway; pyruvate from L-alanine: step 1/1. In terms of biological role, catalyzes the reversible transamination between alanine and 2-oxoglutarate to form pyruvate and glutamate. In Homo sapiens (Human), this protein is Alanine aminotransferase 2 (GPT2).